A 662-amino-acid polypeptide reads, in one-letter code: Potassium channel KAT3 (662 aa).

The Cytoplasmic segment spans residues 1 to 90; that stretch reads MSTTTTEARS…HFDRRYRLWE (90 aa). A helical transmembrane segment spans residues 91–111; sequence LFLVILVGYSAWASLFELAFE. Topologically, residues 112-118 are extracellular; that stretch reads KAAEGAL. The helical transmembrane segment at 119-139 threads the bilayer; that stretch reads LTIDLVVDFFFAVDIILTFFV. Residues 140–163 lie on the Cytoplasmic side of the membrane; the sequence is SYLDNTTYLNVTDHKLIAKRYLKS. Residues 164 to 184 traverse the membrane as a helical segment; the sequence is VAFVMDVASTLPIQFIYKTIT. Residues 185 to 194 are Extracellular-facing; the sequence is GDVGRGQAFG. Residues 195–215 traverse the membrane as a helical; Voltage-sensor segment; that stretch reads FLNLLRLWRLRRVAELFKRLE. Over 216–229 the chain is Cytoplasmic; it reads KDAHFNYFVIRVIK. A helical membrane pass occupies residues 230-250; the sequence is LLCVTIFWIHLAGCILYWIAY. Residues 251–277 are Extracellular-facing; it reads HYPRPTDTWIGSQVEDFKERSVWLGYT. The pore-forming intramembrane region spans 278-297; sequence YSMYWSIVTLTTVGYGDLHA. Residues 298–301 lie on the Extracellular side of the membrane; the sequence is VNSR. The chain crosses the membrane as a helical span at residues 302–322; that stretch reads EKTFNMFYMLFNIGLTSYIIG. Topologically, residues 323–662 are cytoplasmic; that stretch reads IMTNLVVHGA…LRENDHLYIF (340 aa). Residue 406–527 coordinates a nucleoside 3',5'-cyclic phosphate; it reads LFKGFPEGLL…MIIANFMTYL (122 aa). Residues 528–558 are a coiled coil; that stretch reads KGLNDELKKEIPFLRDLLDDADAQVQETVQS. The 72-residue stretch at 591-662 folds into the KHA domain; the sequence is RVIIHGQAPP…LRENDHLYIF (72 aa).

This sequence belongs to the potassium channel family. Plant (TC 1.A.1.4) subfamily. The potassium channel is probably composed of a homo- or heterotetrameric complex of pore-forming subunits. May interact with AKT1 and AKT2. Interacts with SLAC1. Expressed predominantly in root hairs and root endodermis and, at a lower level, in leaf nodes, trichomes, and hydathodes.

Its subcellular location is the membrane. In terms of biological role, probable modulatory (alpha) subunit of inward-rectifying potassium channels. Could mediate potassium uptake from the soil solution by plant roots in association with AKT1. In Arabidopsis thaliana (Mouse-ear cress), this protein is Potassium channel KAT3 (KAT3).